A 376-amino-acid chain; its full sequence is Carbapenem antibiotics biosynthesis protein CarD (376 aa).

This sequence belongs to the proline oxidase family.

It participates in antibiotic biosynthesis; carbapenem biosynthesis. The chain is Carbapenem antibiotics biosynthesis protein CarD (carD) from Pectobacterium carotovorum subsp. carotovorum (Erwinia carotovora subsp. carotovora).